We begin with the raw amino-acid sequence, 185 residues long: Tumor necrosis factor receptor superfamily member 17 (185 aa).

The Extracellular segment spans residues 1 to 49 (MAQQCFHSEYFDSLLHACKPCHLRCSNPPATCQPYCDPSVTSSVKGTYT). Residues 4-36 (QCFHSEYFDSLLHACKPCHLRCSNPPATCQPYC) form a TNFR-Cys repeat. Intrachain disulfides connect Cys5/Cys18, Cys21/Cys32, and Cys25/Cys36. Residues 50–70 (VLWIFLGLTLVLSLALFTISF) form a helical; Signal-anchor for type III membrane protein membrane-spanning segment. Residues 71–185 (LLRKMNPEAL…MGMEKPTHTR (115 aa)) lie on the Cytoplasmic side of the membrane.

As to quaternary structure, associates with TRAF1, TRAF2, TRAF3, TRAF5 and TRAF6. Detected in spleen, thymus, bone marrow and heart, and at lower levels in kidney and lung.

The protein localises to the membrane. In terms of biological role, receptor for TNFSF13B/BLyS/BAFF and TNFSF13/APRIL. Promotes B-cell survival and plays a role in the regulation of humoral immunity. Activates NF-kappa-B and JNK. The protein is Tumor necrosis factor receptor superfamily member 17 (Tnfrsf17) of Mus musculus (Mouse).